The chain runs to 144 residues: Large ribosomal subunit protein uL15 (144 aa).

Residues 1–56 (MELNNLKPAAGAKHAKRRVGRGIGSGLGKTAGRGHKGQKSRSGGFHKVGFEGGQMP) form a disordered region. Residues 21-31 (RGIGSGLGKTA) are compositionally biased toward gly residues.

It belongs to the universal ribosomal protein uL15 family. In terms of assembly, part of the 50S ribosomal subunit.

In terms of biological role, binds to the 23S rRNA. The sequence is that of Large ribosomal subunit protein uL15 from Burkholderia multivorans (strain ATCC 17616 / 249).